We begin with the raw amino-acid sequence, 837 residues long: SLIT and NTRK-like protein 4 (837 aa).

The signal sequence occupies residues 1–18 (MFLWLFLIVSALISSTNA). Over 19–618 (DSDISVEICN…SPPGGPVPLS (600 aa)) the chain is Extracellular. LRR repeat units follow at residues 60-81 (NFYHLNFQNNFLNILYPNTFVN), 84-105 (HAVSLHLGNNKLQNIEGGAFLG), 108-129 (ALKQLHLNNNELKILRADTFLG), 132-153 (NLEYLQADYNLIKYIERGAFNK), 156-177 (KLKVLILNDNLISFLPDNIFRF), and 179-200 (SLTHLDIRGNRIQKLPYIGVLE). N-linked (GlcNAc...) asparagine glycosylation occurs at N81. Residues 213–264 (NPWNCSCDLLPLKAWLENMPYNIYIGEAICETPSDLYGRLLKETNKQELCPM) enclose the LRRCT 1 domain. N-linked (GlcNAc...) asparagine glycosylation occurs at N325. One can recognise an LRRNT domain in the interval 333-375 (QTRVPPLTPCPVPCFCKTHPSDLGLSVNCQEKNIQSMSELTPK). 6 LRR repeats span residues 378–399 (NAKKLHVNGNNIKDVDISDFTE), 402–423 (GLDLLHLGSNQITLIKGEVFHN), 426–447 (NLRRLYLNGNQIERLYPEIFSG), 450–471 (NLQYLYLEYNLIKEILAGTFDS), 474–495 (NLQLLYLNNNLLKSLPVYIFSG), and 497–518 (PLARLNLRNNKFMYLPVSGVLD). N423 is a glycosylation site (N-linked (GlcNAc...) asparagine). The LRRCT 2 domain maps to 531 to 582 (NPWDCTCDLVALKLWLEKLNDGIVVKELKCETPVQFANIELKSLKNEILCPK). A helical transmembrane segment spans residues 619-639 (ILILSILVVLILTVFVAFCLL). The Cytoplasmic segment spans residues 640 to 837 (VFVLRRNKKP…LEEQTALNKI (198 aa)).

This sequence belongs to the SLITRK family. As to quaternary structure, interacts (via LRR 1 and 2 repeats) with PTPRD (via extracellular domain). In terms of tissue distribution, in the adult, significant expression is detected only in the brain. Broadly expressed in embryonic brain with highest expression in subventricular zone, subplate, cortical plate, pyramidal cell layer of hippocampus, thalamus and hypothalamus.

The protein localises to the membrane. It localises to the cell membrane. Functionally, it is involved in synaptogenesis and promotes synapse differentiation. Suppresses neurite outgrowth. The protein is SLIT and NTRK-like protein 4 (Slitrk4) of Mus musculus (Mouse).